Reading from the N-terminus, the 152-residue chain is Smith-Magenis syndrome chromosomal region candidate gene 5 protein homolog (152 aa).

The segment at 41–77 (TPCAGPSSQAPPQPPQASPPAAPDHSRTPSLLASSHS) is disordered. Pro residues predominate over residues 49–62 (QAPPQPPQASPPAA).

The polypeptide is Smith-Magenis syndrome chromosomal region candidate gene 5 protein homolog (SMCR5) (Macaca fascicularis (Crab-eating macaque)).